The sequence spans 263 residues: Acyl-[acyl-carrier-protein]--UDP-N-acetylglucosamine O-acyltransferase (263 aa).

It belongs to the transferase hexapeptide repeat family. LpxA subfamily. In terms of assembly, homotrimer.

Its subcellular location is the cytoplasm. It catalyses the reaction a (3R)-hydroxyacyl-[ACP] + UDP-N-acetyl-alpha-D-glucosamine = a UDP-3-O-[(3R)-3-hydroxyacyl]-N-acetyl-alpha-D-glucosamine + holo-[ACP]. Its pathway is glycolipid biosynthesis; lipid IV(A) biosynthesis; lipid IV(A) from (3R)-3-hydroxytetradecanoyl-[acyl-carrier-protein] and UDP-N-acetyl-alpha-D-glucosamine: step 1/6. Its function is as follows. Involved in the biosynthesis of lipid A, a phosphorylated glycolipid that anchors the lipopolysaccharide to the outer membrane of the cell. The polypeptide is Acyl-[acyl-carrier-protein]--UDP-N-acetylglucosamine O-acyltransferase (Stenotrophomonas maltophilia (strain K279a)).